Here is a 186-residue protein sequence, read N- to C-terminus: MSVADIRNSAESRMSKSLDTLKVNLSKIRTGRAHAGILDHVQVEYYGSPVPVGQVANLNLVDARTISVQPYEKHMAGPIERAIRDSDLGLNPVSLGDTIRVPMPALTEERRRDLTKVVRSEGEDAKVAVRNLRREANEALKKLVKDKIISEDDERRGQDEVQKLTDRAVADIDKMVTQKEAEIMTV.

This sequence belongs to the RRF family.

The protein localises to the cytoplasm. Functionally, responsible for the release of ribosomes from messenger RNA at the termination of protein biosynthesis. May increase the efficiency of translation by recycling ribosomes from one round of translation to another. The chain is Ribosome-recycling factor from Bordetella avium (strain 197N).